The following is a 612-amino-acid chain: Protein tipD (612 aa).

Residues 95 to 128 (RNEKKTQQQPPSGSSKMDSSSSSSSSNRVSGMGS) form a disordered region. Over residues 106–128 (SGSSKMDSSSSSSSSNRVSGMGS) the composition is skewed to low complexity. WD repeat units lie at residues 322-361 (GHNS…QKST), 364-403 (GASQ…SRHT), 406-444 (GHIG…CTRT), 447-486 (CFSS…PTQV), 490-530 (IHEG…TIRT), 535-576 (EYRN…TVKV), and 582-611 (NNGS…IIQW).

Belongs to the WD repeat tipD family.

Its function is as follows. Not known; disruption of the gene for tipD results in morphological defects. This Dictyostelium discoideum (Social amoeba) protein is Protein tipD (tipD).